The primary structure comprises 488 residues: Glutamyl-tRNA(Gln) amidotransferase subunit A, mitochondrial (488 aa).

Active-site charge relay system residues include lysine 62 and serine 140. The Acyl-ester intermediate role is filled by serine 164. The segment at 205–228 is disordered; sequence GHDDNDPTSITPQTRERIQDRLSR. The span at 218-227 shows a compositional bias: basic and acidic residues; sequence TRERIQDRLS.

The protein belongs to the amidase family. GatA subfamily. As to quaternary structure, subunit of the heterotrimeric GatCAB amidotransferase (AdT) complex, composed of A, B and C subunits.

It is found in the mitochondrion. It carries out the reaction L-glutamyl-tRNA(Gln) + L-glutamine + ATP + H2O = L-glutaminyl-tRNA(Gln) + L-glutamate + ADP + phosphate + H(+). Allows the formation of correctly charged Gln-tRNA(Gln) through the transamidation of misacylated Glu-tRNA(Gln) in the mitochondria. The reaction takes place in the presence of glutamine and ATP through an activated gamma-phospho-Glu-tRNA(Gln). The chain is Glutamyl-tRNA(Gln) amidotransferase subunit A, mitochondrial from Tuber melanosporum (strain Mel28) (Perigord black truffle).